Reading from the N-terminus, the 416-residue chain is E3 ubiquitin-protein ligase DMA1 (416 aa).

A disordered region spans residues 1–30 (MSTNTVPSSPPNQTPPAASGIATSHDHTKF). Glycyl lysine isopeptide (Lys-Gly) (interchain with G-Cter in ubiquitin) cross-links involve residues Lys-150, Lys-204, Lys-217, Lys-237, Lys-240, Lys-260, Lys-300, Lys-306, Lys-313, and Lys-317. The region spanning 189–252 (IIIGRYTERV…SGTFLNHQRL (64 aa)) is the FHA domain. The segment at 327-371 (CSICLNKIKPCQAIFISPCAHSWHFHCVRRLVIMNYPQFMCPNCR) adopts an RING-type zinc-finger fold.

This sequence belongs to the DMA1 family. In terms of assembly, interacts with CDC123. Interacts with PCL1. In terms of processing, UBC4-dependent autoubiquitination occurs at Lys-150, Lys-204, Lys-217, Lys-237, Lys-240, Lys-260, Lys-300, Lys-306, Lys-313 and Lys-317. UBC4-dependent autoubiquitination is responsible for DMA2 turnover. UBC13/MMS2-dependent autoubiquitination occurs at Lys-237 and Lys-306. Lys-204 and Lys-306 are also ubiquitinated in trans by DMA2 E3 ligase in association with UBC4.

It is found in the cytoplasm. The enzyme catalyses S-ubiquitinyl-[E2 ubiquitin-conjugating enzyme]-L-cysteine + [acceptor protein]-L-lysine = [E2 ubiquitin-conjugating enzyme]-L-cysteine + N(6)-ubiquitinyl-[acceptor protein]-L-lysine.. Its function is as follows. E3 ubiquitin-protein ligase which functions in cell cycle retarding in conjunction with the UBC4 and UBC13/MMS2 complex, 2 E2 ubiquitin conjugating enzymes. Involved in nutritional control of the cell cycle. Targets the G1 cyclin PCL1 for destruction. Required for proper spindle positioning, likely regulating septin ring deposition at the bud neck. The sequence is that of E3 ubiquitin-protein ligase DMA1 from Saccharomyces cerevisiae (strain ATCC 204508 / S288c) (Baker's yeast).